Here is a 222-residue protein sequence, read N- to C-terminus: Noggin (222 aa).

Positions 1–19 (MDHSQCLVTIYALMVFLGL) are cleaved as a signal peptide. N61 is a glycosylation site (N-linked (GlcNAc...) asparagine). 4 disulfides stabilise this stretch: C145/C182, C168/C218, C174/C220, and C197/C205.

It belongs to the noggin family. In terms of assembly, homodimer.

It localises to the secreted. Functionally, patterns the embryo by interrupting bone morphogenetic proteins (BMP) signaling. Binds BMP-4 and BMP-2 with high affinity. Can abolish BMP-4 activity by blocking binding to cognate cell-surface receptors. Capable of inducing dorsal development in embryos. Causes dorsal mesodermal differentiation of animal cap ectoderm when coexpressed with xWNT-8 and nuclear, sequence-specific DNA-binding protein xBRA. None of these molecules causes dorsal mesoderm formation when expressed alone. The protein is Noggin (nog) of Xenopus laevis (African clawed frog).